Reading from the N-terminus, the 370-residue chain is tRNA (guanine(26)-N(2))-dimethyltransferase (370 aa).

The region spanning 4–368 (TWVTEGRTTI…APLEEIRDCI (365 aa)) is the Trm1 methyltransferase domain. The S-adenosyl-L-methionine site is built by arginine 41, arginine 66, aspartate 82, aspartate 108, and alanine 109. Positions 237, 240, 256, and 259 each coordinate Zn(2+).

It belongs to the class I-like SAM-binding methyltransferase superfamily. Trm1 family.

It carries out the reaction guanosine(26) in tRNA + 2 S-adenosyl-L-methionine = N(2)-dimethylguanosine(26) in tRNA + 2 S-adenosyl-L-homocysteine + 2 H(+). Functionally, dimethylates a single guanine residue at position 26 of a number of tRNAs using S-adenosyl-L-methionine as donor of the methyl groups. In Methanospirillum hungatei JF-1 (strain ATCC 27890 / DSM 864 / NBRC 100397 / JF-1), this protein is tRNA (guanine(26)-N(2))-dimethyltransferase.